Here is a 148-residue protein sequence, read N- to C-terminus: Single-stranded DNA-binding protein 1-B, mitochondrial (148 aa).

Residues 1-17 (MFHRPVLQVFRQFARCQ) constitute a mitochondrion transit peptide. An SSB domain is found at 30 to 142 (MNKVQLLGRV…IIADNIIFLT (113 aa)).

Homotetramer.

Its subcellular location is the mitochondrion. The protein resides in the mitochondrion matrix. The protein localises to the mitochondrion nucleoid. Binds preferentially and cooperatively to pyrimidine rich single-stranded DNA (ss-DNA). Required to maintain the copy number of mitochondrial DNA (mtDNA) and plays crucial roles during mtDNA replication that stimulate activity of the DNA polymerase at the replication fork. May also function in mtDNA repair. This Xenopus laevis (African clawed frog) protein is Single-stranded DNA-binding protein 1-B, mitochondrial (ssbp1-b).